Consider the following 801-residue polypeptide: LPS-assembly protein LptD (801 aa).

An N-terminal signal peptide occupies residues 1-23 (MARLFSLKPLVLALGFCFGTHCA).

Belongs to the LptD family. Component of the lipopolysaccharide transport and assembly complex. Interacts with LptE and LptA.

Its subcellular location is the cell outer membrane. Functionally, together with LptE, is involved in the assembly of lipopolysaccharide (LPS) at the surface of the outer membrane. The protein is LPS-assembly protein LptD of Neisseria gonorrhoeae (strain ATCC 700825 / FA 1090).